Reading from the N-terminus, the 259-residue chain is Ribosomal RNA small subunit methyltransferase A (259 aa).

Residues asparagine 13, leucine 15, glycine 40, glutamate 61, aspartate 85, and asparagine 103 each contribute to the S-adenosyl-L-methionine site.

The protein belongs to the class I-like SAM-binding methyltransferase superfamily. rRNA adenine N(6)-methyltransferase family. RsmA subfamily.

It localises to the cytoplasm. The enzyme catalyses adenosine(1518)/adenosine(1519) in 16S rRNA + 4 S-adenosyl-L-methionine = N(6)-dimethyladenosine(1518)/N(6)-dimethyladenosine(1519) in 16S rRNA + 4 S-adenosyl-L-homocysteine + 4 H(+). Specifically dimethylates two adjacent adenosines (A1518 and A1519) in the loop of a conserved hairpin near the 3'-end of 16S rRNA in the 30S particle. May play a critical role in biogenesis of 30S subunits. This Neisseria gonorrhoeae (strain ATCC 700825 / FA 1090) protein is Ribosomal RNA small subunit methyltransferase A.